The following is a 151-amino-acid chain: Ribosome maturation factor RimP (151 aa).

It belongs to the RimP family.

Its subcellular location is the cytoplasm. Required for maturation of 30S ribosomal subunits. This is Ribosome maturation factor RimP from Crocosphaera subtropica (strain ATCC 51142 / BH68) (Cyanothece sp. (strain ATCC 51142)).